A 588-amino-acid chain; its full sequence is NADP-dependent malic enzyme 3 (588 aa).

N-acetylglycine is present on G2. Y136 functions as the Proton donor in the catalytic mechanism. R189 contacts NADP(+). Residue K207 is the Proton acceptor of the active site. A divalent metal cation is bound by residues E279, D280, and D303. Residues D303, L332 to A348, and N444 contribute to the NADP(+) site.

Belongs to the malic enzymes family. In terms of assembly, homohexamers and homooctamers. The cofactor is Mg(2+). Mn(2+) is required as a cofactor. In terms of tissue distribution, mostly expressed in flowers, and, to a lower extent, in stems. In leaves and stems, restricted to the trichomes and trichome basal cells. Also present in the stipules flanking the base of the inflorescence bract leaves and in the meristematic zone of developing lateral roots. In flowers, present in pollen and the abscission zone of developing siliques.

It is found in the cytoplasm. The enzyme catalyses (S)-malate + NADP(+) = pyruvate + CO2 + NADPH. It catalyses the reaction oxaloacetate + H(+) = pyruvate + CO2. Its activity is regulated as follows. Slightly activated by succinate and aspartate. Repressed by fumarate, malate, oxaloacetate and glucose. This Arabidopsis thaliana (Mouse-ear cress) protein is NADP-dependent malic enzyme 3 (NADP-ME3).